A 376-amino-acid polypeptide reads, in one-letter code: Actin, cytoplasmic (376 aa).

It belongs to the actin family.

It localises to the cytoplasm. The protein resides in the cytoskeleton. It catalyses the reaction ATP + H2O = ADP + phosphate + H(+). Actins are highly conserved proteins that are involved in various types of cell motility and are ubiquitously expressed in all eukaryotic cells. The polypeptide is Actin, cytoplasmic (Tetrahymena pyriformis).